A 72-amino-acid chain; its full sequence is Protein kish-A (72 aa).

Positions 1-26 (MSAIFNFQSLLTVILLLICTCAYIRS) are cleaved as a signal peptide. Topologically, residues 27 to 53 (LAPSLLDRNKTGLLGIFWKCARIGERK) are extracellular. The N-linked (GlcNAc...) asparagine glycan is linked to N35. Residues 54–71 (SPYVAVCCIVMAFSILFI) form a helical membrane-spanning segment. Q72 is a topological domain (cytoplasmic).

The protein belongs to the KISH family.

It localises to the golgi apparatus membrane. Involved in the early part of the secretory pathway. This Bos taurus (Bovine) protein is Protein kish-A (TMEM167A).